The sequence spans 362 residues: Aminomethyltransferase (362 aa).

The protein belongs to the GcvT family. In terms of assembly, the glycine cleavage system is composed of four proteins: P, T, L and H.

The catalysed reaction is N(6)-[(R)-S(8)-aminomethyldihydrolipoyl]-L-lysyl-[protein] + (6S)-5,6,7,8-tetrahydrofolate = N(6)-[(R)-dihydrolipoyl]-L-lysyl-[protein] + (6R)-5,10-methylene-5,6,7,8-tetrahydrofolate + NH4(+). Functionally, the glycine cleavage system catalyzes the degradation of glycine. The chain is Aminomethyltransferase from Porphyromonas gingivalis (strain ATCC 33277 / DSM 20709 / CIP 103683 / JCM 12257 / NCTC 11834 / 2561).